We begin with the raw amino-acid sequence, 196 residues long: ATP-dependent Clp protease proteolytic subunit (196 aa).

Serine 101 acts as the Nucleophile in catalysis. The active site involves histidine 126.

The protein belongs to the peptidase S14 family. In terms of assembly, component of the chloroplastic Clp protease core complex.

It is found in the plastid. The protein localises to the chloroplast stroma. The enzyme catalyses Hydrolysis of proteins to small peptides in the presence of ATP and magnesium. alpha-casein is the usual test substrate. In the absence of ATP, only oligopeptides shorter than five residues are hydrolyzed (such as succinyl-Leu-Tyr-|-NHMec, and Leu-Tyr-Leu-|-Tyr-Trp, in which cleavage of the -Tyr-|-Leu- and -Tyr-|-Trp bonds also occurs).. Cleaves peptides in various proteins in a process that requires ATP hydrolysis. Has a chymotrypsin-like activity. Plays a major role in the degradation of misfolded proteins. This is ATP-dependent Clp protease proteolytic subunit from Pinus thunbergii (Japanese black pine).